Here is a 121-residue protein sequence, read N- to C-terminus: Small ribosomal subunit protein bS6 (121 aa).

The disordered stretch occupies residues 96–121 (DTGPSSMMKTVEREDARKTQQAEYQA). The span at 105–115 (TVEREDARKTQ) shows a compositional bias: basic and acidic residues.

The protein belongs to the bacterial ribosomal protein bS6 family.

Its function is as follows. Binds together with bS18 to 16S ribosomal RNA. This chain is Small ribosomal subunit protein bS6, found in Albidiferax ferrireducens (strain ATCC BAA-621 / DSM 15236 / T118) (Rhodoferax ferrireducens).